The sequence spans 541 residues: Glucose-6-phosphate isomerase (541 aa).

Glu-353 acts as the Proton donor in catalysis. Catalysis depends on residues His-384 and Lys-504.

Belongs to the GPI family.

The protein localises to the cytoplasm. It carries out the reaction alpha-D-glucose 6-phosphate = beta-D-fructose 6-phosphate. It functions in the pathway carbohydrate biosynthesis; gluconeogenesis. It participates in carbohydrate degradation; glycolysis; D-glyceraldehyde 3-phosphate and glycerone phosphate from D-glucose: step 2/4. Catalyzes the reversible isomerization of glucose-6-phosphate to fructose-6-phosphate. The chain is Glucose-6-phosphate isomerase from Deinococcus radiodurans (strain ATCC 13939 / DSM 20539 / JCM 16871 / CCUG 27074 / LMG 4051 / NBRC 15346 / NCIMB 9279 / VKM B-1422 / R1).